Here is a 281-residue protein sequence, read N- to C-terminus: Acetyl-coenzyme A carboxylase carboxyl transferase subunit beta 2 (281 aa).

The 256-residue stretch at 26–281 (LLTRCPVCHE…TITQGGHQDV (256 aa)) folds into the CoA carboxyltransferase N-terminal domain. Cys-30, Cys-33, Cys-48, and Cys-51 together coordinate Zn(2+). Residues 30–51 (CPVCHEDCYTQDLGEFKVCPHC) form a C4-type zinc finger.

It belongs to the AccD/PCCB family. As to quaternary structure, acetyl-CoA carboxylase is a heterohexamer composed of biotin carboxyl carrier protein (AccB), biotin carboxylase (AccC) and two subunits each of ACCase subunit alpha (AccA) and ACCase subunit beta (AccD). Zn(2+) is required as a cofactor.

The protein resides in the cytoplasm. The catalysed reaction is N(6)-carboxybiotinyl-L-lysyl-[protein] + acetyl-CoA = N(6)-biotinyl-L-lysyl-[protein] + malonyl-CoA. It functions in the pathway lipid metabolism; malonyl-CoA biosynthesis; malonyl-CoA from acetyl-CoA: step 1/1. Its function is as follows. Component of the acetyl coenzyme A carboxylase (ACC) complex. Biotin carboxylase (BC) catalyzes the carboxylation of biotin on its carrier protein (BCCP) and then the CO(2) group is transferred by the transcarboxylase to acetyl-CoA to form malonyl-CoA. The sequence is that of Acetyl-coenzyme A carboxylase carboxyl transferase subunit beta 2 from Lactiplantibacillus plantarum (strain JDM1) (Lactobacillus plantarum).